The following is a 341-amino-acid chain: Elongation factor Ts, mitochondrial 2 (341 aa).

A mitochondrion-targeting transit peptide spans 1-17 (MLAARFASRAFPRTRLY).

This sequence belongs to the EF-Ts family.

The protein localises to the mitochondrion. Its function is as follows. Associates with the EF-Tu.GDP complex and induces the exchange of GDP to GTP. It remains bound to the aminoacyl-tRNA.EF-Tu.GTP complex up to the GTP hydrolysis stage on the ribosome. This Postia placenta (strain ATCC 44394 / Madison 698-R) (Brown rot fungus) protein is Elongation factor Ts, mitochondrial 2.